A 188-amino-acid polypeptide reads, in one-letter code: UPF0200 protein M1627_1244 (188 aa).

Residue 15–22 (GMPGSGKS) participates in ATP binding.

The protein belongs to the UPF0200 family.

This is UPF0200 protein M1627_1244 from Saccharolobus islandicus (strain M.16.27) (Sulfolobus islandicus).